The primary structure comprises 229 residues: Putative N-acetylmannosamine-6-phosphate 2-epimerase (229 aa).

Belongs to the NanE family.

It catalyses the reaction an N-acyl-D-glucosamine 6-phosphate = an N-acyl-D-mannosamine 6-phosphate. It participates in amino-sugar metabolism; N-acetylneuraminate degradation; D-fructose 6-phosphate from N-acetylneuraminate: step 3/5. Functionally, converts N-acetylmannosamine-6-phosphate (ManNAc-6-P) to N-acetylglucosamine-6-phosphate (GlcNAc-6-P). This Shigella dysenteriae serotype 1 (strain Sd197) protein is Putative N-acetylmannosamine-6-phosphate 2-epimerase.